Consider the following 210-residue polypeptide: 23 kDa jasmonate-induced protein (210 aa).

It belongs to the jasmonate-induced protein family.

The chain is 23 kDa jasmonate-induced protein from Hordeum vulgare (Barley).